The following is a 145-amino-acid chain: Protein MMF1, mitochondrial (145 aa).

Residues 1–17 (MFLRNSVLRTAPVLRRG) constitute a mitochondrion transit peptide.

This sequence belongs to the RutC family.

The protein localises to the mitochondrion matrix. In terms of biological role, plays a role in the maintenance of mitochondrial DNA. The sequence is that of Protein MMF1, mitochondrial (MMF1) from Saccharomyces cerevisiae (strain ATCC 204508 / S288c) (Baker's yeast).